Consider the following 240-residue polypeptide: UDP-2,3-diacylglucosamine hydrolase (240 aa).

Mn(2+) is bound by residues Asp-7, His-9, Asp-40, Asn-78, and His-113. Substrate is bound at residue 78–79 (NR). Substrate is bound by residues Asp-121, Ser-159, Thr-163, Lys-166, and His-194. 2 residues coordinate Mn(2+): His-194 and His-196.

This sequence belongs to the LpxH family. Requires Mn(2+) as cofactor.

Its subcellular location is the cell inner membrane. The catalysed reaction is UDP-2-N,3-O-bis[(3R)-3-hydroxytetradecanoyl]-alpha-D-glucosamine + H2O = 2-N,3-O-bis[(3R)-3-hydroxytetradecanoyl]-alpha-D-glucosaminyl 1-phosphate + UMP + 2 H(+). The protein operates within glycolipid biosynthesis; lipid IV(A) biosynthesis; lipid IV(A) from (3R)-3-hydroxytetradecanoyl-[acyl-carrier-protein] and UDP-N-acetyl-alpha-D-glucosamine: step 4/6. Functionally, hydrolyzes the pyrophosphate bond of UDP-2,3-diacylglucosamine to yield 2,3-diacylglucosamine 1-phosphate (lipid X) and UMP by catalyzing the attack of water at the alpha-P atom. Involved in the biosynthesis of lipid A, a phosphorylated glycolipid that anchors the lipopolysaccharide to the outer membrane of the cell. This Pseudomonas entomophila (strain L48) protein is UDP-2,3-diacylglucosamine hydrolase.